The following is a 159-amino-acid chain: GDP-mannose mannosyl hydrolase (159 aa).

Substrate is bound by residues 2–3 (FL), Phe-8, and Arg-36. In terms of domain architecture, Nudix hydrolase spans 13-153 (RSTPLVSLDF…SRAYFLAEKR (141 aa)). The Mg(2+) site is built by Gly-49, Glu-69, and Gln-122. The Nudix box motif lies at 50–71 (GRVQKDETLEAAFERLTMAELG).

It belongs to the Nudix hydrolase family. Homodimer. It depends on Mg(2+) as a cofactor.

The enzyme catalyses GDP-alpha-D-mannose + H2O = D-mannose + GDP + H(+). Hydrolyzes GDP-mannose. This Escherichia coli O157:H7 protein is GDP-mannose mannosyl hydrolase.